Here is a 1551-residue protein sequence, read N- to C-terminus: UDP-glucose:glycoprotein glucosyltransferase 1 (1551 aa).

The N-terminal stretch at 1-42 is a signal peptide; it reads MCSRGDANTADAAAARRVTGLRYNMRLLIALALPCLFSLAEA. N-linked (GlcNAc...) asparagine glycosylation is found at Asn-269, Asn-536, and Asn-1228. The interval 1244 to 1551 is glucosyltransferase; the sequence is KAEEVKQDKD…QEGSQKHEEL (308 aa). The residue at position 1277 (Ser-1277) is a Phosphoserine. Positions 1531 to 1551 are disordered; sequence KELGTLHTEETQEGSQKHEEL. Residues 1548-1551 carry the Prevents secretion from ER motif; that stretch reads HEEL.

This sequence belongs to the glycosyltransferase 8 family. In terms of assembly, monomer as well as in a tight complex with SELENOF. Interacts with METTL23. Part of a large chaperone multiprotein complex comprising DNAJB11, HSP90B1, HSPA5, HYOU, PDIA2, PDIA4, PDIA6, PPIB, SDF2L1, UGGT1 and very small amounts of ERP29, but not, or at very low levels, CALR nor CANX. The cofactor is Ca(2+). Mn(2+) is required as a cofactor.

The protein resides in the endoplasmic reticulum lumen. Its subcellular location is the endoplasmic reticulum-Golgi intermediate compartment. The catalysed reaction is N(4)-(alpha-D-Man-(1-&gt;2)-alpha-D-Man-(1-&gt;2)-alpha-D-Man-(1-&gt;3)-[alpha-D-Man-(1-&gt;2)-alpha-D-Man-(1-&gt;3)-[alpha-D-Man-(1-&gt;2)-alpha-D-Man-(1-&gt;6)]-alpha-D-Man-(1-&gt;6)]-beta-D-Man-(1-&gt;4)-beta-D-GlcNAc-(1-&gt;4)-beta-D-GlcNAc)-L-asparaginyl-[protein] (N-glucan mannose isomer 9A1,2,3B1,2,3) + UDP-alpha-D-glucose = N(4)-(alpha-D-Glc-(1-&gt;3)-alpha-D-Man-(1-&gt;2)-alpha-D-Man-(1-&gt;2)-alpha-D-Man-(1-&gt;3)-[alpha-D-Man-(1-&gt;2)-alpha-D-Man-(1-&gt;3)-[alpha-D-Man-(1-&gt;2)-alpha-D-Man-(1-&gt;6)]-alpha-D-Man-(1-&gt;6)]-beta-D-Man-(1-&gt;4)-beta-D-GlcNAc-(1-&gt;4)-beta-D-GlcNAc)-L-asparaginyl-[protein] + UDP + H(+). The protein operates within protein modification; protein glycosylation. Functionally, recognizes glycoproteins with minor folding defects. Reglucosylates single N-glycans near the misfolded part of the protein, thus providing quality control for protein folding in the endoplasmic reticulum. Reglucosylated proteins are recognized by calreticulin for recycling to the endoplasmic reticulum and refolding or degradation. This is UDP-glucose:glycoprotein glucosyltransferase 1 (Uggt1) from Mus musculus (Mouse).